We begin with the raw amino-acid sequence, 63 residues long: Small ribosomal subunit protein eS30B (63 aa).

The disordered stretch occupies residues 1–35 (MAKVHGSLARAGKVKSQTPKVEKTEKPKKPKGRAY). Position 16 is a phosphoserine (Ser-16). Phosphothreonine is present on Thr-48.

Belongs to the eukaryotic ribosomal protein eS30 family. Component of the small ribosomal subunit (SSU). Mature yeast ribosomes consist of a small (40S) and a large (60S) subunit. The 40S small subunit contains 1 molecule of ribosomal RNA (18S rRNA) and 33 different proteins (encoded by 57 genes). The large 60S subunit contains 3 rRNA molecules (25S, 5.8S and 5S rRNA) and 46 different proteins (encoded by 81 genes).

It localises to the cytoplasm. Component of the ribosome, a large ribonucleoprotein complex responsible for the synthesis of proteins in the cell. The small ribosomal subunit (SSU) binds messenger RNAs (mRNAs) and translates the encoded message by selecting cognate aminoacyl-transfer RNA (tRNA) molecules. The large subunit (LSU) contains the ribosomal catalytic site termed the peptidyl transferase center (PTC), which catalyzes the formation of peptide bonds, thereby polymerizing the amino acids delivered by tRNAs into a polypeptide chain. The nascent polypeptides leave the ribosome through a tunnel in the LSU and interact with protein factors that function in enzymatic processing, targeting, and the membrane insertion of nascent chains at the exit of the ribosomal tunnel. This Saccharomyces cerevisiae (strain ATCC 204508 / S288c) (Baker's yeast) protein is Small ribosomal subunit protein eS30B.